Here is a 747-residue protein sequence, read N- to C-terminus: Transcription factor phm2 (747 aa).

The zn(2)-C6 fungal-type DNA-binding region spans 21–50 (CNACRKRKRVRCDRLHPCSNCASRGLGSTC). 2 disordered regions span residues 112–150 (GLQN…DHGS) and 414–436 (TAEP…PESR).

It localises to the nucleus. Its function is as follows. Transcription factor that regulates the expression of the gene cluster that mediates the biosynthesis of the trans-fused decalin-containing tetramic acid phomasetin. The sequence is that of Transcription factor phm2 from Pyrenochaetopsis sp.